Reading from the N-terminus, the 174-residue chain is Gamma-crystallin C (174 aa).

2 consecutive Beta/gamma crystallin 'Greek key' domains span residues Gly-2–Ser-40 and Gly-41–Pro-83. Cys-23 is modified (S-methylcysteine). The interval Gln-84 to Ser-87 is connecting peptide. Beta/gamma crystallin 'Greek key' domains are found at residues His-88–Glu-128 and Gly-129–Val-171.

It belongs to the beta/gamma-crystallin family. As to quaternary structure, monomer.

In terms of biological role, crystallins are the dominant structural components of the vertebrate eye lens. This Canis lupus familiaris (Dog) protein is Gamma-crystallin C (CRYGC).